The following is a 197-amino-acid chain: MTDFILNAQARTDLGKGASRRLRHAASIPAVVYGGDKEAQSLTIVAKEIAKLFENEAAYSHVIELNVDGAKQNVVVKAMQRHPAKGFIMHADFVRVVAGQKLTAKVPVHFIGEEAPVKKGGEISHVVSEIEVSCEAKDLPEFIEVDLANAEVGTIIHLSDLKAPKGVEFVALAHGDDKAVANVHAPRVAPEAEGAAE.

It belongs to the bacterial ribosomal protein bL25 family. CTC subfamily. In terms of assembly, part of the 50S ribosomal subunit; part of the 5S rRNA/L5/L18/L25 subcomplex. Contacts the 5S rRNA. Binds to the 5S rRNA independently of L5 and L18.

This is one of the proteins that binds to the 5S RNA in the ribosome where it forms part of the central protuberance. This is Large ribosomal subunit protein bL25 from Pseudomonas putida (strain GB-1).